Reading from the N-terminus, the 327-residue chain is Phenylalanine--tRNA ligase alpha subunit (327 aa).

Mg(2+) is bound at residue glutamate 252.

It belongs to the class-II aminoacyl-tRNA synthetase family. Phe-tRNA synthetase alpha subunit type 1 subfamily. Tetramer of two alpha and two beta subunits. The cofactor is Mg(2+).

The protein resides in the cytoplasm. The catalysed reaction is tRNA(Phe) + L-phenylalanine + ATP = L-phenylalanyl-tRNA(Phe) + AMP + diphosphate + H(+). This chain is Phenylalanine--tRNA ligase alpha subunit, found in Klebsiella pneumoniae (strain 342).